The primary structure comprises 480 residues: Ribosome assembly protein rrb1 (480 aa).

2 disordered regions span residues 1-78 (MSKR…WLPG) and 155-176 (QHDE…ILEH). Acidic residues-rich tracts occupy residues 28 to 52 (VDTE…YIEA) and 158 to 172 (ENDD…EEDP). Residues Ser-163 and Ser-166 each carry the phosphoserine modification. WD repeat units lie at residues 183-225 (GACN…RSLD), 289-329 (SHTA…KTSA), 334-375 (AHPG…SSSS), 385-425 (WHRA…DEEE), and 446-480 (MGQQ…TITF).

Associates with ribosomal protein L3.

The protein localises to the cytoplasm. Its subcellular location is the nucleus. It is found in the nucleolus. Functionally, involved in regulation of L3 expression and stability and plays a role in early 60S ribosomal subunit assembly. May be required for proper assembly of pre-ribosomal particles during early ribosome biogenesis, presumably by targeting L3 onto the 35S precursor rRNA. This chain is Ribosome assembly protein rrb1 (rrb1), found in Schizosaccharomyces pombe (strain 972 / ATCC 24843) (Fission yeast).